The sequence spans 801 residues: Phenylalanine--tRNA ligase beta subunit (801 aa).

Residues 39–147 (GGGLDEVVVA…TDLPLGVPVF (109 aa)) enclose the tRNA-binding domain. The region spanning 401 to 477 (LPRRTVRFRV…RLNGYNNIPV (77 aa)) is the B5 domain. Aspartate 455, aspartate 461, glutamate 464, and glutamate 465 together coordinate Mg(2+). The region spanning 708 to 801 (SRFPDTFRDI…LVKKLAVTIR (94 aa)) is the FDX-ACB domain.

The protein belongs to the phenylalanyl-tRNA synthetase beta subunit family. Type 1 subfamily. Tetramer of two alpha and two beta subunits. Mg(2+) is required as a cofactor.

The protein localises to the cytoplasm. The catalysed reaction is tRNA(Phe) + L-phenylalanine + ATP = L-phenylalanyl-tRNA(Phe) + AMP + diphosphate + H(+). In Geobacter metallireducens (strain ATCC 53774 / DSM 7210 / GS-15), this protein is Phenylalanine--tRNA ligase beta subunit.